A 346-amino-acid chain; its full sequence is GTPase Obg (346 aa).

Positions 1–159 (MQFVDEANIR…RNLGLELSVL (159 aa)) constitute an Obg domain. Residues 127-149 (NVHFKSSTNRTPRQCTPGEPGDE) form a disordered region. Positions 130–140 (FKSSTNRTPRQ) are enriched in polar residues. One can recognise an OBG-type G domain in the interval 160–333 (ADVGLLGMPN…LVKEVAYGLE (174 aa)). GTP-binding positions include 166-173 (GMPNAGKS), 191-195 (FTTLY), 213-216 (DIPG), 283-286 (NKTD), and 314-316 (SAV). Residues S173 and T193 each coordinate Mg(2+).

It belongs to the TRAFAC class OBG-HflX-like GTPase superfamily. OBG GTPase family. As to quaternary structure, monomer. Mg(2+) is required as a cofactor.

The protein localises to the cytoplasm. An essential GTPase which binds GTP, GDP and possibly (p)ppGpp with moderate affinity, with high nucleotide exchange rates and a fairly low GTP hydrolysis rate. Plays a role in control of the cell cycle, stress response, ribosome biogenesis and in those bacteria that undergo differentiation, in morphogenesis control. In Hydrogenovibrio crunogenus (strain DSM 25203 / XCL-2) (Thiomicrospira crunogena), this protein is GTPase Obg.